The primary structure comprises 80 residues: RNA-binding protein Hfq (80 aa).

Residues 10–69 form the Sm domain; that stretch reads DPFLNVLRKEHIPVSIYLVNGIKLQGHIDSFDQYVVLLRNSVTQMVYKHAISTIVPGKAV.

It belongs to the Hfq family. Homohexamer.

Its function is as follows. RNA chaperone that binds small regulatory RNA (sRNAs) and mRNAs to facilitate mRNA translational regulation in response to envelope stress, environmental stress and changes in metabolite concentrations. Also binds with high specificity to tRNAs. The chain is RNA-binding protein Hfq from Nitrosomonas eutropha (strain DSM 101675 / C91 / Nm57).